Here is a 201-residue protein sequence, read N- to C-terminus: Glycerol-3-phosphate acyltransferase (201 aa).

5 helical membrane passes run 10 to 30 (MLIG…GLIL), 60 to 80 (LAAA…LIAA), 86 to 106 (AAIA…WIGF), 116 to 136 (LGVL…AWIV), and 166 to 186 (ALAA…RANI).

It belongs to the PlsY family. Probably interacts with PlsX.

It localises to the cell inner membrane. It carries out the reaction an acyl phosphate + sn-glycerol 3-phosphate = a 1-acyl-sn-glycero-3-phosphate + phosphate. Its pathway is lipid metabolism; phospholipid metabolism. Functionally, catalyzes the transfer of an acyl group from acyl-phosphate (acyl-PO(4)) to glycerol-3-phosphate (G3P) to form lysophosphatidic acid (LPA). This enzyme utilizes acyl-phosphate as fatty acyl donor, but not acyl-CoA or acyl-ACP. The chain is Glycerol-3-phosphate acyltransferase from Brucella canis (strain ATCC 23365 / NCTC 10854 / RM-666).